We begin with the raw amino-acid sequence, 1499 residues long: Rho GTPase-activating protein 35 (1499 aa).

The segment at 1-266 is has GTPase activity, required for proper localization; sequence MMMARKQDVR…IPYFEALKQQ (266 aa). Residues lysine 28, 33–37, leucine 52, serine 56, 95–97, 201–203, and 229–231 each bind GTP; these read IGKSC, EQT, KCD, and SAR. FF domains follow at residues 270 to 327, 368 to 422, 429 to 483, and 485 to 550; these read IATA…HIHR, KLLE…HLEK, RAEM…HQKQ, and IDRA…HIHF. Tyrosine 308 is modified (phosphotyrosine). Serine 589 is modified (phosphoserine). The 176-residue stretch at 592-767 folds into the pG1 pseudoGTPase domain; the sequence is DLNIDRINLV…LLDSKRNLNL (176 aa). Phosphoserine occurs at positions 770 and 773. The 165-residue stretch at 783–947 folds into the pG2 pseudoGTPase domain; sequence RIVMCLMCGD…FKDVVEKKNI (165 aa). Phosphoserine occurs at positions 970, 975, 985, and 1072. Position 1087 is a phosphotyrosine (tyrosine 1087). Position 1105 is a phosphotyrosine; by ABL2 and PTK6 (tyrosine 1105). Positions 1124-1141 are enriched in polar residues; the sequence is KAQSNGSGNGSDSEMDTS. Residues 1124–1148 are disordered; that stretch reads KAQSNGSGNGSDSEMDTSSLERGRK. Phosphoserine is present on residues serine 1134, serine 1142, serine 1150, serine 1176, serine 1179, and serine 1221. Residues 1177 to 1207 are disordered; sequence VGSDDELGPIRKKEEDQASQGYKGDNAVIPY. A required for phospholipid binding and regulation of the substrate preference region spans residues 1213 to 1236; that stretch reads PRRRNILRSLRRNTKKPKPKPRPS. A Phosphothreonine modification is found at threonine 1226. Serine 1236 carries the phosphoserine modification. In terms of domain architecture, Rho-GAP spans 1249 to 1436; the sequence is VPLTTVVTPE…LFIQQCPFFF (188 aa). Residues 1446–1499 are disordered; it reads GAAPGSPSAMAPTVPFLTSTPATSQPSPPQSPPPTPQSPMQPLLSSQLQAEHTL. A compositionally biased stretch (low complexity) spans 1448–1470; that stretch reads APGSPSAMAPTVPFLTSTPATSQ. Positions 1471–1484 are enriched in pro residues; it reads PSPPQSPPPTPQSP. A phosphoserine mark is found at serine 1472 and serine 1476. Threonine 1480 carries the post-translational modification Phosphothreonine. Serine 1483 bears the Phosphoserine mark. The segment covering 1485–1499 has biased composition (low complexity); it reads MQPLLSSQLQAEHTL.

As to quaternary structure, interacts with the general transcription factor GTF2I, the interaction sequesters GTF2I in the cytoplasm. Interacts with RASA1. In terms of processing, phosphorylation of Tyr-1105 by PTK6 promotes the association with RASA1, inactivating RHOA while activating RAS. Phosphorylation at Tyr-308 by PDGFRA inhibits binding to GTF2I. Phosphorylated by PRKCA at Ser-1221 and Thr-1226, induces relocalization from the cytoplasm to regions of plasma membrane ruffling and prevents the binding and substrate specificity regulation by phospholipids. In brain, phosphorylated by FYN and SRC. During focal adhesion formation, phosphorylated by MAPK1 and MAPK3 at the C-terminal region, probably at Ser-1451, Ser-1476, Thr-1480 and Ser-1483. Phosphorylation by MAPK1 and MAPK3 inhibits GAP function and localizes ARGHAP35 away from newly forming focal adhesions and stress fibers in cells spreading on fibronectin. Phosphorylation at Ser-1476 and Thr-1480 by GSK3B requires priming by MAPK and inhibits RhoGAP activity and modulates polarized cell migration. As to expression, expressed in the developing kidneys. Expressed in all regions of the mature nervous system (at protein level). Detected in neutrophils (at protein level).

It localises to the cytoplasm. It is found in the cytoskeleton. The protein resides in the cilium basal body. The protein localises to the nucleus. Its subcellular location is the cell membrane. Functionally, rho GTPase-activating protein (GAP). Binds several acidic phospholipids which inhibits the Rho GAP activity to promote the Rac GAP activity. This binding is inhibited by phosphorylation by PRKCA. Involved in cell differentiation as well as cell adhesion and migration, plays an important role in retinal tissue morphogenesis, neural tube fusion, midline fusion of the cerebral hemispheres and mammary gland branching morphogenesis. Transduces signals from p21-ras to the nucleus, acting via the ras GTPase-activating protein (GAP). Transduces SRC-dependent signals from cell-surface adhesion molecules, such as laminin, to promote neurite outgrowth. Regulates axon outgrowth, guidance and fasciculation. Modulates Rho GTPase-dependent F-actin polymerization, organization and assembly, is involved in polarized cell migration and in the positive regulation of ciliogenesis and cilia elongation. During mammary gland development, is required in both the epithelial and stromal compartments for ductal outgrowth. Represses transcription of the glucocorticoid receptor by binding to the cis-acting regulatory sequence 5'-GAGAAAAGAAACTGGAGAAACTC-3'; this function is however unclear and would need additional experimental evidences. This Mus musculus (Mouse) protein is Rho GTPase-activating protein 35.